The primary structure comprises 527 residues: Protein disulfide-isomerase A2 (527 aa).

The signal sequence occupies residues 1 to 20; sequence MDKQLLPVLLLLLGVSGSWG. The tract at residues 20 to 41 is disordered; it reads GQGEEPGGPSEVLPEEPTGEEV. Residues 29–155 form the Thioredoxin 1 domain; the sequence is SEVLPEEPTG…IAEWLRRRVG (127 aa). Residues C74 and C77 each act as nucleophile in the active site. C74 and C77 are oxidised to a cystine. 2 N-linked (GlcNAc...) asparagine glycosylation sites follow: N130 and N287. In terms of domain architecture, Thioredoxin 2 spans 355-499; it reads VIAITAASVA…FSKFLDSGGH (145 aa). Catalysis depends on nucleophile residues C421 and C424. An intrachain disulfide couples C421 to C424. Residues 495–527 are disordered; that stretch reads DSGGHLPKEEPKEPAASAPEAQANSTLGPKEEL. An N-linked (GlcNAc...) asparagine glycan is attached at N518. The Prevents secretion from ER motif lies at 524-527; sequence KEEL.

This sequence belongs to the protein disulfide isomerase family. As to quaternary structure, part of a large chaperone multiprotein complex comprising DNAJB11, HSP90B1, HSPA5, HYOU, PDIA2, PDIA4, PDIA6, PPIB, SDF2L1, UGGT1 and very small amounts of ERP29, but not, or at very low levels, CALR nor CANX. Post-translationally, glycosylated. In terms of tissue distribution, highly expressed in pancreas.

The protein resides in the endoplasmic reticulum lumen. The catalysed reaction is Catalyzes the rearrangement of -S-S- bonds in proteins.. Functionally, acts as an intracellular estrogen-binding protein. May be involved in modulating cellular levels and biological functions of estrogens in the pancreas. May act as a chaperone that inhibits aggregation of misfolded proteins. This Mus musculus (Mouse) protein is Protein disulfide-isomerase A2.